Here is a 309-residue protein sequence, read N- to C-terminus: Ecto-ADP-ribosyltransferase 5 (309 aa).

Residues 1 to 23 (MILEDLLMVLSCLSLHALWKVRA) form the signal peptide. C43 and C259 are disulfide-bonded. Positions 63 to 253 (ALLRESWEAA…IVTLWSYDQT (191 aa)) constitute a TR mART core domain. Residue Y100 coordinates NAD(+). A glycan (N-linked (GlcNAc...) asparagine) is linked at N102. NAD(+) contacts are provided by R161 and Q181. Residue R161 is part of the active site. S184 is an active-site residue. N197 carries N-linked (GlcNAc...) asparagine glycosylation. Position 215 (S215) interacts with NAD(+). The active site involves E222.

This sequence belongs to the Arg-specific ADP-ribosyltransferase family. As to expression, abundantly expressed in testis. Lower levels in cardiac and skeletal muscle.

It localises to the secreted. It is found in the membrane. The catalysed reaction is L-arginyl-[protein] + NAD(+) = N(omega)-(ADP-D-ribosyl)-L-arginyl-[protein] + nicotinamide + H(+). In Mus musculus (Mouse), this protein is Ecto-ADP-ribosyltransferase 5 (Art5).